Consider the following 292-residue polypeptide: Protease HtpX (292 aa).

The next 2 helical transmembrane spans lie at 5 to 25 and 34 to 54; these read VVLF…VMSV and SGLL…SLLL. Zn(2+) is bound at residue histidine 140. Glutamate 141 is an active-site residue. Histidine 144 lines the Zn(2+) pocket. The next 2 membrane-spanning stretches (helical) occupy residues 155 to 175 and 193 to 213; these read LLQG…GGII and IIVF…AMWF. Residue glutamate 218 coordinates Zn(2+).

The protein belongs to the peptidase M48B family. It depends on Zn(2+) as a cofactor.

It localises to the cell inner membrane. The chain is Protease HtpX from Xanthomonas campestris pv. campestris (strain B100).